A 538-amino-acid polypeptide reads, in one-letter code: (R)-citramalate synthase (538 aa).

One can recognise a Pyruvate carboxyltransferase domain in the interval 3–268; it reads IKVYDTTLRD…IPKENLKKLF (266 aa).

Belongs to the alpha-IPM synthase/homocitrate synthase family.

The enzyme catalyses pyruvate + acetyl-CoA + H2O = (3R)-citramalate + CoA + H(+). It participates in amino-acid biosynthesis; L-isoleucine biosynthesis; 2-oxobutanoate from pyruvate: step 1/3. In terms of biological role, catalyzes the condensation of pyruvate and acetyl-coenzyme A to form (R)-citramalate. In Thermotoga maritima (strain ATCC 43589 / DSM 3109 / JCM 10099 / NBRC 100826 / MSB8), this protein is (R)-citramalate synthase.